The sequence spans 498 residues: MLALQHASKSFGPVRALSDVSLELYSGEAHALLGENGAGKSTLVKILSGVHRADGGELWVDGQLRVFHSPAEARDAGIAIIYQEPTLFPDLTVAENVLMGRQPLRRGRIDRRAMLTHVGRILQELGVPLDPARPVRGLSIADQQLVEIAKALSFQARVLIMDEPTAALTGQETERLFRVVRTLRARGAAVLLITHRLEEAFAECQRFTIMRDGRWVSSGPAAAYTIDSVVRGMVGRDVRELYPKLPVTPGEVALEVRGLSRRGVFRDVSFVVRRGEIVGLAGLVGAGRSEVARSIFGIDPRDAGEVRVQGRTIPAGNTQAAMRAGIGLVPEDRRQQGLVMDLSIERNATLTVLNRLRRGWLMDRTAETQTASDWTSRLRLKAHRLTDPVSTLSGGNQQKVVLAKWLATGPAVLIVDEPTRGVDVGAKAEVHRTLAELAAGGLAVVMISSDLPEVLGMADRILVMREGALVGELSRQDASEEAVMYLATGQQPAIGSVA.

2 consecutive ABC transporter domains span residues 2-237 and 247-491; these read LALQ…VGRD and VTPG…TGQQ. Position 34–41 (34–41) interacts with ATP; it reads GENGAGKS.

Belongs to the ABC transporter superfamily. Ribose importer (TC 3.A.1.2.1) family. The complex is composed of an ATP-binding protein (RbsA), two transmembrane proteins (RbsC) and a solute-binding protein (RbsB).

The protein resides in the cell membrane. The enzyme catalyses D-ribose(out) + ATP + H2O = D-ribose(in) + ADP + phosphate + H(+). Part of the ABC transporter complex RbsABC involved in ribose import. Responsible for energy coupling to the transport system. The sequence is that of Ribose import ATP-binding protein RbsA from Deinococcus geothermalis (strain DSM 11300 / CIP 105573 / AG-3a).